Here is a 299-residue protein sequence, read N- to C-terminus: Pentalenolactone F synthase (299 aa).

Fe cation contacts are provided by His105 and Asp107. Residues Thr133 and Trp251 each contribute to the 2-oxoglutarate site. His266 provides a ligand contact to Fe cation. Arg277 serves as a coordination point for 2-oxoglutarate.

The protein belongs to the TfdA dioxygenase family. Fe(2+) serves as cofactor.

The catalysed reaction is pentalenolactone D + 2 2-oxoglutarate + 2 O2 = pentalenolactone F + 2 succinate + 2 CO2 + H2O. The protein operates within antibiotic biosynthesis; pentalenolactone biosynthesis. Its activity is regulated as follows. Activated by ascorbate. Functionally, catalyzes the Fe(2+) and alpha-ketoglutarate-dependent oxidation of pentalenolactone D to pentalenolactone F in the biosynthesis of pentalenolactone antibiotic. Also able to catalyze the oxidation of pentalenolactone D to pentalenolactone E. The chain is Pentalenolactone F synthase (pntD) from Streptomyces arenae.